The sequence spans 235 residues: Phosphoribosylaminoimidazole-succinocarboxamide synthase (235 aa).

The protein belongs to the SAICAR synthetase family.

The catalysed reaction is 5-amino-1-(5-phospho-D-ribosyl)imidazole-4-carboxylate + L-aspartate + ATP = (2S)-2-[5-amino-1-(5-phospho-beta-D-ribosyl)imidazole-4-carboxamido]succinate + ADP + phosphate + 2 H(+). Its pathway is purine metabolism; IMP biosynthesis via de novo pathway; 5-amino-1-(5-phospho-D-ribosyl)imidazole-4-carboxamide from 5-amino-1-(5-phospho-D-ribosyl)imidazole-4-carboxylate: step 1/2. This Streptococcus mutans serotype c (strain ATCC 700610 / UA159) protein is Phosphoribosylaminoimidazole-succinocarboxamide synthase.